Reading from the N-terminus, the 294-residue chain is Probable 3-hydroxyisobutyrate dehydrogenase (294 aa).

NAD(+) is bound by residues 3-31 (TIAF…RGFD) and threonine 93. Lysine 168 is an active-site residue. Residue lysine 243 coordinates NAD(+).

It belongs to the HIBADH-related family.

It catalyses the reaction 3-hydroxy-2-methylpropanoate + NAD(+) = 2-methyl-3-oxopropanoate + NADH + H(+). Its pathway is amino-acid degradation; L-valine degradation. This chain is Probable 3-hydroxyisobutyrate dehydrogenase (mmsB), found in Mycobacterium bovis (strain ATCC BAA-935 / AF2122/97).